A 463-amino-acid polypeptide reads, in one-letter code: Phosphoglycerate transporter protein (463 aa).

Residues 1–29 lie on the Cytoplasmic side of the membrane; sequence MLTILKTGQSAHKVPPEKVQATYGRYRIQ. The next 12 membrane-spanning stretches (helical) occupy residues 30–50, 59–79, 106–126, 127–147, 160–180, 188–208, 267–287, 297–317, 326–346, 349–369, 391–411, and 413–433; these read ALLS…NFTL, LDLS…AYGI, IVNV…LVVF, NGLF…NWFP, ISHN…FAIL, ASYI…LVLG, VFVY…LLTV, VAFL…GWLS, MPLA…YWKS, LLMV…PQFL, GFMS…VMVD, and LGWY…ILFC.

Belongs to the major facilitator superfamily. Organophosphate:Pi antiporter (OPA) (TC 2.A.1.4) family.

The protein resides in the cell inner membrane. The phosphoglycerate transporter protein is a part of the PGT transport system. It is the membrane bound transporter for phosphoglycerate into salmonella. This is Phosphoglycerate transporter protein (pgtP) from Salmonella typhimurium (strain LT2 / SGSC1412 / ATCC 700720).